The following is a 236-amino-acid chain: B-cell antigen receptor complex-associated protein alpha chain (236 aa).

An N-terminal signal peptide occupies residues 1 to 32; sequence MPGGPGLLQALCATTFLLFLISAGGLGPGSQA. One can recognise an Ig-like C2-type domain in the interval 33–122; the sequence is LWVDGGPPSM…EKDLNQKILS (90 aa). Over 33–151 the chain is Extracellular; the sequence is LWVDGGPPSM…LDMGEGTKNN (119 aa). Cys54 and Cys109 are joined by a disulfide. Residues Asn66 and Asn76 are each glycosylated (N-linked (GlcNAc...) asparagine). Residues 152-172 form a helical membrane-spanning segment; the sequence is IITAEGIILLFCAVVPGTLLL. The Cytoplasmic segment spans residues 173–236; the sequence is FRKRWQNMKF…GDGDVQLEKP (64 aa). Positions 185–213 constitute an ITAM domain; that stretch reads DAQDDYEDENLYEGLNLDDCSMYEDISRG. The residue at position 196 (Tyr196) is a Phosphotyrosine; by SRC-type Tyr-kinases. Residue Tyr207 is modified to Phosphotyrosine. Residue Arg212 is modified to Asymmetric dimethylarginine; by PRMT1. Tyr218 carries the post-translational modification Phosphotyrosine; by Tyr-kinases.

As to quaternary structure, heterodimer of alpha and beta chains; disulfide-linked. Part of the B-cell antigen receptor complex where the alpha/beta chain heterodimer is non-covalently associated with an antigen-specific membrane-bound surface immunoglobulin of two heavy chains and two light chains. Interacts through its phosphorylated ITAM domain with the SH2 domains of SYK which stimulates SYK autophosphorylation and activation. Also interacts, when phosphorylated on Tyr-207, with the SH2 domain of BLNK/SLP65, bringing BLNK into proximity with SYK and allowing SYK to phosphorylate BLNK which is necessary for trafficking of the BCR to late endosomes. Interacts with Src-family tyrosine kinases including FYN and LYN, increasing their activity. Post-translationally, phosphorylated on tyrosine, serine and threonine residues upon B-cell activation. Phosphorylation of tyrosine residues by Src-family kinases, including LYN, is an early and essential feature of the BCR signaling cascade. The phosphorylated tyrosines serve as docking sites for SH2-domain containing kinases, leading to their activation which in turn leads to phosphorylation of downstream targets. Phosphorylation of serine and threonine residues may prevent subsequent tyrosine phosphorylation. Arginine methylation in the ITAM domain may interfere with the binding of SYK. It promotes signals leading to B-cell differentiation.

It localises to the cell membrane. Required in cooperation with CD79B for initiation of the signal transduction cascade activated by binding of antigen to the B-cell antigen receptor complex (BCR) which leads to internalization of the complex, trafficking to late endosomes and antigen presentation. Also required for BCR surface expression and for efficient differentiation of pro- and pre-B-cells. Stimulates SYK autophosphorylation and activation. Binds to BLNK, bringing BLNK into proximity with SYK and allowing SYK to phosphorylate BLNK. Also interacts with and increases activity of some Src-family tyrosine kinases. Represses BCR signaling during development of immature B-cells. This Canis lupus familiaris (Dog) protein is B-cell antigen receptor complex-associated protein alpha chain (CD79A).